The primary structure comprises 243 residues: Putative ABC transporter arginine-binding protein 2 (243 aa).

An N-terminal signal peptide occupies residues 1 to 19 (MKKVLIAALIAGFSLSATA).

Belongs to the bacterial solute-binding protein 3 family. The complex is composed of two ATP-binding proteins (ArtP), two transmembrane proteins (ArtM and ArtQ) and two solute-binding proteins (ArtJ and ArtI).

It is found in the periplasm. Its function is as follows. Part of the ABC transporter complex ArtPIQMJ involved in arginine transport. The sequence is that of Putative ABC transporter arginine-binding protein 2 (artI) from Escherichia coli (strain K12).